Consider the following 151-residue polypeptide: uncharacterized protein (151 aa).

3 consecutive transmembrane segments (helical) span residues 12–32, 59–79, and 114–134; these read LAYFIDGIIVSVPSYIILFII, LAFLPTMLIMIVISVLYYGLL, and YFAYILSGIIFYIGFIMIAFG.

The protein localises to the cell membrane. This is an uncharacterized protein from Bacillus subtilis (strain 168).